The primary structure comprises 114 residues: Pole-localizer protein TmaR (114 aa).

A coiled-coil region spans residues 70-111 (RDDYESRVDDYTIRNAELSKQRREASTKMKEQKKAHAELLKN). A disordered region spans residues 89–114 (KQRREASTKMKEQKKAHAELLKNAEK).

This sequence belongs to the pole-localizer TmaR family.

It is found in the cytoplasm. Its function is as follows. Pole-localizer protein involved in the regulation of several cellular processes. The sequence is that of Pole-localizer protein TmaR from Haemophilus influenzae (strain PittEE).